Consider the following 302-residue polypeptide: MLNFRSPETMPLVSLANAGVRRNGRWLVRGVDFSISRGEIVTLIGPNGSGKSTTAKTAIGVLKPDEGHVERLAGLKVGYVPQKLAVDWTLPLTVERLMTLTGPLKGREIEESLAATGMLHMAKAEVQHLSGGEFQRALLARAIARKPDLLVLDEPVQGVDFSGEIALYELIKQIRNRTGCGILLISHDLHIVMAETDTVVCLNGHVCCRGTPQVVSQSPEYLKLFGRRAAGALAVYSHHHDHTHLPDGRVLHADGSITESCFPGDGHHHHEEADNIHDHDPDCGCGHHARLQGYDGTEKRDA.

Residues valine 13–arginine 228 form the ABC transporter domain. Glycine 45 to serine 52 is an ATP binding site.

Belongs to the ABC transporter superfamily. Zinc importer (TC 3.A.1.15.5) family. The complex is composed of two ATP-binding proteins (ZnuC), two transmembrane proteins (ZnuB) and a solute-binding protein (ZnuA).

The protein resides in the cell inner membrane. The enzyme catalyses Zn(2+)(out) + ATP(in) + H2O(in) = Zn(2+)(in) + ADP(in) + phosphate(in) + H(+)(in). Its function is as follows. Part of the ABC transporter complex ZnuABC involved in zinc import. Responsible for energy coupling to the transport system. The protein is Zinc import ATP-binding protein ZnuC of Rhizobium meliloti (strain 1021) (Ensifer meliloti).